We begin with the raw amino-acid sequence, 344 residues long: Homoserine O-acetyltransferase (344 aa).

Residue cysteine 142 is the Acyl-thioester intermediate of the active site. The substrate site is built by lysine 163 and serine 192. The Proton acceptor role is filled by histidine 235. The active site involves glutamate 237. Arginine 249 contacts substrate.

This sequence belongs to the MetA family.

Its subcellular location is the cytoplasm. The enzyme catalyses L-homoserine + acetyl-CoA = O-acetyl-L-homoserine + CoA. The protein operates within amino-acid biosynthesis; L-methionine biosynthesis via de novo pathway; O-acetyl-L-homoserine from L-homoserine: step 1/1. Functionally, transfers an acetyl group from acetyl-CoA to L-homoserine, forming acetyl-L-homoserine. This Bifidobacterium adolescentis (strain ATCC 15703 / DSM 20083 / NCTC 11814 / E194a) protein is Homoserine O-acetyltransferase.